The primary structure comprises 484 residues: MVSPVVLATTAMIVVFLLAQRYLSLPVLPNEPLLIPHWMPFFGHAFRFARSKRSFFRWANAKTGGQPFSVPMGGRRHYIFSDPADIAGIHKNGKTLSIRGFVRFIYISIWGFKPADADAMWEIKPEWHRMDIEWLLSDKNDQIAVQYLRRIEEQLRALDAEVEGAPDKAIVRPGLKTVVDVQGKATCQVLYGATTLEKHPGLLDDLTIMVRDGFWGLLFRAPRFLFRNAYEARDRIINTYADLVENIETRKDVSQYLYERTVYLTQQGISPQAQGADMLRTMFASLLNSMPTGYLALLHILAEPGLADEVRKELIDCGYLERSPEEMLEILPGKMPLLRSIWHETLRMHNNSLTVREVTADTKFMGKTKWQVQKGGVINIPCGLMHFNEALHPDPESFHARRFMDKELGGEGESHARTTKPFGGGSTHCPGRVFAEKQMIGLVAALLMRYDMGIVNADWKMPLVSEFDDITKQPTVWIRISKRV.

A helical transmembrane segment spans residues 2–24 (VSPVVLATTAMIVVFLLAQRYLS). Position 429 (Cys-429) interacts with heme.

This sequence belongs to the cytochrome P450 family. Heme is required as a cofactor.

The protein localises to the membrane. It functions in the pathway secondary metabolite biosynthesis. Its function is as follows. Cytochrome P450 monooxygenase; part of the gene cluster that mediates the biosynthesis of oxaleimides, cytotoxic compounds containing an unusual disubstituted succinimide moiety. The first step of the pathway is provided by the HR-PKS poxF that serves in a new mode of collaborative biosynthesis with the PKS-NRPS poxE, by providing the olefin containing amino acid substrate via the synthesis of an ACP-bound dec-4-enoate. The cytochrome P450 monooxygenase poxM-catalyzed oxidation at the alpha-position creates the enzyme-bound 2-hydroxydec-4-enoyl-ACP thioester, which may be prone to spontaneous hydrolysis to yield 2-hydroxydec-4-enoic acid due to increased electrophilicity of the carbonyl. 2-hydroxydec-4-enoic acid can then be further oxidized by poxM to yield the alpha-ketoacid 2-oxodec-4-enoicacid, which is reductively aminated by the aminotransferase poxL to yield (S,E)-2-aminodec-4-enoic acid. The Hybrid PKS-NRPS synthetase poxE then performs condensation between the octaketide product of its PKS modules and the amino group of (S,E)-2-aminodec-4-enoic acid which is activated and incorporated by the adenylation domain. The resulting aminoacyl product can be cyclized by the Diels-Alderase PoxQ and reductively released by the reductive (R) domain of poxE to yield an aldehyde intermediate. The released aldehyde is then substrate for a Knoevenagel condensation by the hydrolyase poxO followed by an oxidation at the 5-position of the pyrrolidone ring. The presence of the olefin from the amino acid building block allows for migration of the substituted allyl group to occur. This allylic transposition reaction takes place in a conjugate addition, semipinacol-like fashion to yield a succinimide intermediate. Iterative two-electron oxidations of the C7 methyl of the succinimide intermediate to the carboxylic acid can be catalyzed by one of two remaining cytochrome P450 monooxygenasess poxC or poxD to yield oxaleimide A. Subsequent oxidation yields the maleimide scaffold oxaleimide I. Both oxaleimide A and oxaleimide I can undergo oxidative modifications in the decalin ring to yield the series of products oxaleimides B to H. The sequence is that of Cytochrome P450 monooxygenase poxD from Penicillium oxalicum.